The sequence spans 497 residues: NAD(P)H-quinone oxidoreductase chain 4, chloroplastic (497 aa).

13 helical membrane-spanning segments follow: residues 4-24 (LPWL…IPLF), 35-55 (YTLG…CCHF), 87-107 (MGLI…AWPV), 113-133 (LFHF…ASQD), 134-154 (ILLF…LLSI), 167-187 (FILY…TIGL), 207-227 (IALE…KLPI), 242-262 (HYST…YGLI), 274-294 (AIFA…ASLI), 313-333 (MGFV…GAIL), 386-406 (LALP…GIVI), 416-436 (IVIT…LLSM), and 462-482 (IFIS…PNLV).

It belongs to the complex I subunit 4 family.

It is found in the plastid. The protein localises to the chloroplast thylakoid membrane. It catalyses the reaction a plastoquinone + NADH + (n+1) H(+)(in) = a plastoquinol + NAD(+) + n H(+)(out). It carries out the reaction a plastoquinone + NADPH + (n+1) H(+)(in) = a plastoquinol + NADP(+) + n H(+)(out). The polypeptide is NAD(P)H-quinone oxidoreductase chain 4, chloroplastic (Angiopteris evecta (Mule's foot fern)).